The sequence spans 423 residues: CinA-like protein (423 aa).

Belongs to the CinA family.

This is CinA-like protein from Synechococcus sp. (strain CC9311).